A 445-amino-acid chain; its full sequence is GTPase Der (445 aa).

EngA-type G domains lie at Pro3–Gln167 and Ile180–Met353. Residues Gly9–Ser16, Asp56–Phe60, Asn119–Glu122, Gly186–Ser193, Asp233–Leu237, and Asn298–Asp301 contribute to the GTP site. The region spanning Ala354 to Asn438 is the KH-like domain.

This sequence belongs to the TRAFAC class TrmE-Era-EngA-EngB-Septin-like GTPase superfamily. EngA (Der) GTPase family. As to quaternary structure, associates with the 50S ribosomal subunit.

In terms of biological role, GTPase that plays an essential role in the late steps of ribosome biogenesis. The protein is GTPase Der of Burkholderia ambifaria (strain MC40-6).